The following is a 373-amino-acid chain: Muconate cycloisomerase 1 (373 aa).

The active site involves Lys-169. The active-site Proton acceptor is the Lys-169. Residues Asp-198, Glu-224, and Asp-249 each contribute to the Mn(2+) site. The Proton donor role is filled by Glu-327.

The protein belongs to the mandelate racemase/muconate lactonizing enzyme family. It depends on Mn(2+) as a cofactor.

It carries out the reaction (S)-muconolactone = cis,cis-muconate + H(+). The polypeptide is Muconate cycloisomerase 1 (catB) (Rhodococcus opacus (Nocardia opaca)).